The following is a 215-amino-acid chain: Kinetochore protein Spc25 (215 aa).

Positions 43–114 (DNLLTAMEKA…MECIHALKRA (72 aa)) form a coiled coil.

It belongs to the SPC25 family. Component of the Ndc80 complex, which is composed of Ndc80, Nuf2 and Spc25.

It is found in the nucleus. The protein resides in the chromosome. It localises to the centromere. Its subcellular location is the kinetochore. Acts as a component of the essential kinetochore-associated Ndc80 complex, which is required for chromosome segregation and spindle checkpoint activity during meiosis and mitosis. Required for kinetochore integrity and the organization of stable microtubule binding sites in the outer plate of the kinetochore. Participates in SAC signaling that responds specifically to disruptions in spindle microtubule dynamics. The NDC80 complex synergistically enhances the affinity of the SKA1 complex for microtubules and may allow the NDC80 complex to track depolymerizing microtubules. The protein is Kinetochore protein Spc25 of Drosophila ananassae (Fruit fly).